The following is a 37-amino-acid chain: Cytochrome b6-f complex subunit 5 (37 aa).

The helical transmembrane segment at 5-25 threads the bilayer; it reads SLFGIVLGLIPITLAGLFVTA.

Belongs to the PetG family. The 4 large subunits of the cytochrome b6-f complex are cytochrome b6, subunit IV (17 kDa polypeptide, PetD), cytochrome f and the Rieske protein, while the 4 small subunits are PetG, PetL, PetM and PetN. The complex functions as a dimer.

The protein resides in the plastid. It is found in the chloroplast thylakoid membrane. Component of the cytochrome b6-f complex, which mediates electron transfer between photosystem II (PSII) and photosystem I (PSI), cyclic electron flow around PSI, and state transitions. PetG is required for either the stability or assembly of the cytochrome b6-f complex. This is Cytochrome b6-f complex subunit 5 from Arabis hirsuta (Hairy rock-cress).